The sequence spans 230 residues: MSQTPEQIIAIVPAAGIGSRMGAEIPKQYLQLNEQSILSHTLDCLLSHPDIDKVIVALNPADNYFAKLPQVKHPKLECVIGGKERADSVLSGLKIAEAGAWALVHDAARPCLTHRDIDKLIASVNEFPQGAILAAPVRDTMKRTDEKGLISETVCRERLWHALTPQYFPVSSLMQNLTDALAAGALITDEASAMEWAGVMPGIVSGRADNIKVTHPDDLQLASLFLKNAV.

The protein belongs to the IspD/TarI cytidylyltransferase family. IspD subfamily.

It carries out the reaction 2-C-methyl-D-erythritol 4-phosphate + CTP + H(+) = 4-CDP-2-C-methyl-D-erythritol + diphosphate. Its pathway is isoprenoid biosynthesis; isopentenyl diphosphate biosynthesis via DXP pathway; isopentenyl diphosphate from 1-deoxy-D-xylulose 5-phosphate: step 2/6. In terms of biological role, catalyzes the formation of 4-diphosphocytidyl-2-C-methyl-D-erythritol from CTP and 2-C-methyl-D-erythritol 4-phosphate (MEP). The chain is 2-C-methyl-D-erythritol 4-phosphate cytidylyltransferase from Shewanella halifaxensis (strain HAW-EB4).